The sequence spans 228 residues: Tol-Pal system protein TolQ (228 aa).

The next 3 membrane-spanning stretches (helical) occupy residues 16-36 (IVVQ…WAII), 137-157 (VSPY…FMAL), and 172-192 (IAEA…AVMA).

Belongs to the ExbB/TolQ family. The Tol-Pal system is composed of five core proteins: the inner membrane proteins TolA, TolQ and TolR, the periplasmic protein TolB and the outer membrane protein Pal. They form a network linking the inner and outer membranes and the peptidoglycan layer.

It localises to the cell inner membrane. In terms of biological role, part of the Tol-Pal system, which plays a role in outer membrane invagination during cell division and is important for maintaining outer membrane integrity. This Haemophilus influenzae (strain ATCC 51907 / DSM 11121 / KW20 / Rd) protein is Tol-Pal system protein TolQ.